Consider the following 161-residue polypeptide: NADH-quinone oxidoreductase subunit I (161 aa).

4Fe-4S ferredoxin-type domains are found at residues 52–82 and 92–121; these read LRRY…IESE and SRYD…ETRV. 8 residues coordinate [4Fe-4S] cluster: Cys62, Cys65, Cys68, Cys72, Cys101, Cys104, Cys107, and Cys111.

This sequence belongs to the complex I 23 kDa subunit family. NDH-1 is composed of 14 different subunits. Subunits NuoA, H, J, K, L, M, N constitute the membrane sector of the complex. It depends on [4Fe-4S] cluster as a cofactor.

The protein resides in the cell inner membrane. The catalysed reaction is a quinone + NADH + 5 H(+)(in) = a quinol + NAD(+) + 4 H(+)(out). NDH-1 shuttles electrons from NADH, via FMN and iron-sulfur (Fe-S) centers, to quinones in the respiratory chain. The immediate electron acceptor for the enzyme in this species is believed to be ubiquinone. Couples the redox reaction to proton translocation (for every two electrons transferred, four hydrogen ions are translocated across the cytoplasmic membrane), and thus conserves the redox energy in a proton gradient. The chain is NADH-quinone oxidoreductase subunit I from Azoarcus sp. (strain BH72).